A 358-amino-acid polypeptide reads, in one-letter code: CX3C chemokine receptor 1 (358 aa).

Residues 1–26 (MHTTLPESTSENFEYYDLAEACDMGD) lie on the Extracellular side of the membrane. Residues 27–47 (IVALGTVFVVILYSLVFAFGL) form a helical membrane-spanning segment. Topologically, residues 48–68 (VGNLLVVFALINSQRSKSITD) are cytoplasmic. A helical membrane pass occupies residues 69–89 (IYLLNLALSDLLFVATLPFWT). Residues 90–105 (HYVINEQGLHHATCKL) lie on the Extracellular side of the membrane. Cys103 and Cys176 are disulfide-bonded. The helical transmembrane segment at 106–126 (ITAFFFIGFFGGIFFITVISV) threads the bilayer. The Cytoplasmic segment spans residues 127–147 (DRFLAIVLAANSMSNRTVQHG). Residues 148-168 (VTTSLGVWAAAILVATPQFMF) form a helical membrane-spanning segment. At 169-186 (TREKENECFGDYPEILQE) the chain is on the extracellular side. Residues 187 to 207 (IWPVILNTEINFLGFLLPLLI) traverse the membrane as a helical segment. The Cytoplasmic portion of the chain corresponds to 208–232 (MSYCYFRIMQTLFSCKNHKKAKAIR). The helical transmembrane segment at 233–253 (LIFLVVVVFFLFWTPYNVMIF) threads the bilayer. The Extracellular segment spans residues 254–275 (LQTLNLYDFFPKCDVKRDLKLA). Residues 276–296 (ISVTETIAFSHCCLNPLIYAF) traverse the membrane as a helical segment. The Cytoplasmic segment spans residues 297–358 (AGEKFRRYLY…TSDGDASILL (62 aa)). A Phosphothreonine modification is found at Thr349.

It belongs to the G-protein coupled receptor 1 family. Found in a ternary complex with CX3CL1 and ITGAV:ITGB3 or ITGA4:ITGB1. Post-translationally, this protein is not N-glycosylated which is unusual for G-protein-coupled receptors.

It localises to the cell membrane. Receptor for the C-X3-C chemokine fractalkine (CX3CL1) present on many early leukocyte cells; CX3CR1-CX3CL1 signaling exerts distinct functions in different tissue compartments, such as immune response, inflammation, cell adhesion and chemotaxis. CX3CR1-CX3CL1 signaling mediates cell migratory functions. Responsible for the recruitment of natural killer (NK) cells to inflamed tissues. Acts as a regulator of inflammation process leading to atherogenesis by mediating macrophage and monocyte recruitment to inflamed atherosclerotic plaques, promoting cell survival. Involved in airway inflammation by promoting interleukin 2-producing T helper (Th2) cell survival in inflamed lung. Involved in the migration of circulating monocytes to non-inflamed tissues, where they differentiate into macrophages and dendritic cells. Acts as a negative regulator of angiogenesis, probably by promoting macrophage chemotaxis. Plays a key role in brain microglia by regulating inflammatory response in the central nervous system (CNS) and regulating synapse maturation. Required to restrain the microglial inflammatory response in the CNS and the resulting parenchymal damage in response to pathological stimuli. Involved in brain development by participating in synaptic pruning, a natural process during which brain microglia eliminates extra synapses during postnatal development. Synaptic pruning by microglia is required to promote the maturation of circuit connectivity during brain development. Acts as an important regulator of the gut microbiota by controlling immunity to intestinal bacteria and fungi. Expressed in lamina propria dendritic cells in the small intestine, which form transepithelial dendrites capable of taking up bacteria in order to provide defense against pathogenic bacteria. Required to initiate innate and adaptive immune responses against dissemination of commensal fungi (mycobiota) component of the gut: expressed in mononuclear phagocytes (MNPs) and acts by promoting induction of antifungal IgG antibodies response to confer protection against disseminated C.albicans or C.auris infection. Also acts as a receptor for C-C motif chemokine CCL26, inducing cell chemotaxis. This is CX3C chemokine receptor 1 from Bos taurus (Bovine).